The following is a 346-amino-acid chain: Short-wave-sensitive opsin 1 (346 aa).

Residues 1 to 31 are Extracellular-facing; that stretch reads MSGEDDFYLFQNISSVGPWDGPQYHLAPVWA. N-linked (GlcNAc...) asparagine glycosylation is present at Asn-12. Residues 32–56 form a helical membrane-spanning segment; the sequence is FRLQAAFMGFVFFVGTPLNAIVLVA. At 57-68 the chain is on the cytoplasmic side; that stretch reads TLHYKKLRQPLN. A helical membrane pass occupies residues 69-94; it reads YILVNVSLGGFLFCIFSVFTVFIASC. The Extracellular segment spans residues 95–108; it reads HGYFLFGRHVCALE. Residues Cys-105 and Cys-182 are joined by a disulfide bond. A helical membrane pass occupies residues 109 to 128; that stretch reads AFLGSVAGLVTGWSLAFLAF. The Cytoplasmic portion of the chain corresponds to 129 to 147; that stretch reads ERYVVICKPFGSIRFNSKH. The chain crosses the membrane as a helical span at residues 148-171; that stretch reads ALMVVLATWIIGIGVSIPPFFGWS. At 172-197 the chain is on the extracellular side; sequence RFIPEGLQCSCGPDWYTVGTKYRSEY. A helical transmembrane segment spans residues 198-225; it reads YTWFLFIFCFIIPLSLICFSYSQLLRTL. The Cytoplasmic segment spans residues 226–247; that stretch reads RAVAAQQQESATTQKAEREVSH. Residues 248 to 271 traverse the membrane as a helical segment; it reads MVVVMVGSFCLCYVPYAALAMYMV. The Extracellular portion of the chain corresponds to 272 to 279; sequence NNRNHGLD. Residues 280–304 traverse the membrane as a helical segment; the sequence is LRLVTIPAFFSKSSCVYNPIIYCFM. An N6-(retinylidene)lysine modification is found at Lys-291. Over 305 to 346 the chain is Cytoplasmic; it reads NKQFRACILEMVCRKPMADESDVSGSQKTEVSTVSSSKVGPH. The interval 324 to 346 is disordered; sequence ESDVSGSQKTEVSTVSSSKVGPH. A compositionally biased stretch (low complexity) spans 330–346; that stretch reads SQKTEVSTVSSSKVGPH.

This sequence belongs to the G-protein coupled receptor 1 family. Opsin subfamily. Phosphorylated on some or all of the serine and threonine residues present in the C-terminal region. As to expression, expressed in the inner and outer segments of cone photoreceptor cells in the retina (at protein level).

It is found in the cell membrane. Its subcellular location is the photoreceptor inner segment. The protein resides in the cell projection. It localises to the cilium. The protein localises to the photoreceptor outer segment. It is found in the cytoplasm. Its subcellular location is the perinuclear region. Functionally, visual pigments are the light-absorbing molecules that mediate vision. They consist of an apoprotein, opsin, covalently linked to cis-retinal. Required for the maintenance of cone outer segment organization in the ventral retina, but not essential for the maintenance of functioning cone photoreceptors. Involved in ensuring correct abundance and localization of retinal membrane proteins. May increase spectral sensitivity in dim light. This is Short-wave-sensitive opsin 1 (Opn1sw) from Mus musculus (Mouse).